Consider the following 306-residue polypeptide: MTTSLVLHPRWADTLMYVYEKSPNENNQNKSQTMEGLSGNCPATHCRDLMSHPALGRHSGTIATHQGSVYSDISSPDTGRQCPAPQTSSSASLSYGYPFGNPYYGCRLSHSHNVNLQQKPCSYHPAEKYAEPSSALPTEELSSRAKEFAFYPSFASSYQAVPGYLDVSVMPSISGHPEPRHDALIPMEGYQHWALSNGWDGQVYCSKEQTQSTHLWKSPFPDVVPLQPEVSSYRRGRKKRVPYTKLQLKELEKEYAASKFITKDKRRRISAATNLSERQVTIWFQNRRVKEKKFISKSKSSHMHTT.

The disordered stretch occupies residues 68–90 (SVYSDISSPDTGRQCPAPQTSSS). Positions 236 to 295 (GRKKRVPYTKLQLKELEKEYAASKFITKDKRRRISAATNLSERQVTIWFQNRRVKEKKFI) form a DNA-binding region, homeobox.

The protein belongs to the Abd-B homeobox family.

Its subcellular location is the nucleus. Its function is as follows. Sequence-specific transcription factor which is part of a developmental regulatory system that provides cells with specific positional identities on the anterior-posterior axis. In Takifugu rubripes (Japanese pufferfish), this protein is Homeobox protein Hox-C13a (hoxc13a).